An 84-amino-acid polypeptide reads, in one-letter code: Acetylcholine receptor subunit alpha (84 aa).

2 disulfide bridges follow: Cys7/Cys21 and Cys71/Cys72. Asn20 is a glycosylation site (N-linked (GlcNAc...) asparagine).

It belongs to the ligand-gated ion channel (TC 1.A.9) family. Acetylcholine receptor (TC 1.A.9.1) subfamily. Alpha-1/CHRNA1 sub-subfamily. As to quaternary structure, one of the alpha chains that assemble within the acetylcholine receptor, a pentamer of two alpha chains, a beta, a delta, and a gamma (in immature muscle) or epsilon (in mature muscle) chains. The muscle heteropentamer composed of alpha-1, beta-1, delta, epsilon subunits interacts with the alpha-conotoxin ImII.

It is found in the postsynaptic cell membrane. Its subcellular location is the cell membrane. It catalyses the reaction K(+)(in) = K(+)(out). The enzyme catalyses Na(+)(in) = Na(+)(out). Upon acetylcholine binding, the AChR responds by an extensive change in conformation that affects all subunits and leads to opening of an ion-conducting channel across the plasma membrane. In Crocidura russula (Greater white-toothed shrew), this protein is Acetylcholine receptor subunit alpha (CHRNA1).